Here is a 326-residue protein sequence, read N- to C-terminus: tRNA(Ile)-lysidine synthase (326 aa).

25 to 30 (SGGQDS) lines the ATP pocket.

This sequence belongs to the tRNA(Ile)-lysidine synthase family.

Its subcellular location is the cytoplasm. It carries out the reaction cytidine(34) in tRNA(Ile2) + L-lysine + ATP = lysidine(34) in tRNA(Ile2) + AMP + diphosphate + H(+). In terms of biological role, ligates lysine onto the cytidine present at position 34 of the AUA codon-specific tRNA(Ile) that contains the anticodon CAU, in an ATP-dependent manner. Cytidine is converted to lysidine, thus changing the amino acid specificity of the tRNA from methionine to isoleucine. The sequence is that of tRNA(Ile)-lysidine synthase from Prochlorococcus marinus (strain NATL1A).